The following is a 349-amino-acid chain: N-acetyl-gamma-glutamyl-phosphate reductase (349 aa).

Cys-149 is an active-site residue.

It belongs to the NAGSA dehydrogenase family. Type 1 subfamily.

It is found in the cytoplasm. It catalyses the reaction N-acetyl-L-glutamate 5-semialdehyde + phosphate + NADP(+) = N-acetyl-L-glutamyl 5-phosphate + NADPH + H(+). The protein operates within amino-acid biosynthesis; L-arginine biosynthesis; N(2)-acetyl-L-ornithine from L-glutamate: step 3/4. Its function is as follows. Catalyzes the NADPH-dependent reduction of N-acetyl-5-glutamyl phosphate to yield N-acetyl-L-glutamate 5-semialdehyde. The sequence is that of N-acetyl-gamma-glutamyl-phosphate reductase from Acinetobacter baumannii (strain AB307-0294).